The primary structure comprises 484 residues: MTKSLLSLAVTAFILGGCSLIPDYQAPEAPVAAQWPQGPAYSPTQSADVAAAEQGWRQFFHDPALQQLIQTSLVNNRDLRVAALNLDAYRAQYRIQRADLFPAVSATGSGSRQRVPANMSQTGESGITSQYSATLGVSAYELDLFGRVRSLTEQALETYLSSEQARRSTQIALVASVANAYYTWQADQALFKLTEETLKTYEESYNLTRRSNEVGVASALDVSQARTAVEGARVKYSQYQRLVAQDVNSLTVLLGTGIPADLAKPLELDADQLAEVPAGLPSDILQRRPDIQEAEHLLKAANANIGAARAAFFPSISLTANAGSLSPDMGHLFSGGQGTWLFQPQINLPIFNAGSLKASLDYSKIQKDINVAKYEKTIQTAFQEVSDGLAARKTFEEQLQAQRDLVQANQDYYRLAERRYRIGIDSNLTFLDAQRNLFSAQQALIGDRLSQLTSEVNLYKALGGGWYEQTGQANQQASVETPKG.

Residues 1-17 (MTKSLLSLAVTAFILGG) form the signal peptide. The N-palmitoyl cysteine moiety is linked to residue cysteine 18. Cysteine 18 carries the S-diacylglycerol cysteine lipid modification.

The protein belongs to the outer membrane factor (OMF) (TC 1.B.17) family.

Its subcellular location is the cell outer membrane. Its function is as follows. The outer membrane component of an antibiotic efflux pump. Confers resistance to numerous structurally unrelated antibiotics such as carbenicillin, chloramphenicol, erythromycin, novobiocin, streptomycin and tetracycline. Is not involved in organic solvent efflux. The sequence is that of Antibiotic efflux pump outer membrane protein ArpC (arpC) from Pseudomonas putida (Arthrobacter siderocapsulatus).